The sequence spans 153 residues: Putative nuclear shuttle protein (153 aa).

The protein belongs to the nanoviridae nuclear shuttle protein family.

It is found in the host nucleus. Its subcellular location is the host cytoplasm. Putative nuclear shuttle protein. In Cicer arietinum (Chickpea), this protein is Putative nuclear shuttle protein (DNA-N).